The primary structure comprises 393 residues: Elongation factor Tu (393 aa).

One can recognise a tr-type G domain in the interval 10-203; that stretch reads KPHVNIGTIG…AVDDYIPEPV (194 aa). Residues 19–26 form a G1 region; the sequence is GHVDHGKT. 19–26 serves as a coordination point for GTP; that stretch reads GHVDHGKT. Thr-26 serves as a coordination point for Mg(2+). A G2 region spans residues 60–64; the sequence is GITIS. A G3 region spans residues 81–84; that stretch reads DCPG. GTP contacts are provided by residues 81–85 and 136–139; these read DCPGH and NKVD. The G4 stretch occupies residues 136–139; sequence NKVD. The tract at residues 173–175 is G5; sequence SAL.

Belongs to the TRAFAC class translation factor GTPase superfamily. Classic translation factor GTPase family. EF-Tu/EF-1A subfamily. In terms of assembly, monomer.

It localises to the cytoplasm. The enzyme catalyses GTP + H2O = GDP + phosphate + H(+). GTP hydrolase that promotes the GTP-dependent binding of aminoacyl-tRNA to the A-site of ribosomes during protein biosynthesis. In Chlorobaculum parvum (strain DSM 263 / NCIMB 8327) (Chlorobium vibrioforme subsp. thiosulfatophilum), this protein is Elongation factor Tu.